The primary structure comprises 86 residues: DNA-directed RNA polymerase subunit Rpo6 (86 aa).

The protein belongs to the archaeal Rpo6/eukaryotic RPB6 RNA polymerase subunit family. As to quaternary structure, part of the RNA polymerase complex.

The protein localises to the cytoplasm. The enzyme catalyses RNA(n) + a ribonucleoside 5'-triphosphate = RNA(n+1) + diphosphate. Functionally, DNA-dependent RNA polymerase (RNAP) catalyzes the transcription of DNA into RNA using the four ribonucleoside triphosphates as substrates. This is DNA-directed RNA polymerase subunit Rpo6 from Sulfurisphaera tokodaii (strain DSM 16993 / JCM 10545 / NBRC 100140 / 7) (Sulfolobus tokodaii).